An 827-amino-acid chain; its full sequence is Putative potassium transporter 12 (827 aa).

Positions 1–31 (MEEIEEGSSNNSIRRVGTGSSDRRWVDGSEV) are disordered. Topologically, residues 1-82 (MEEIEEGSSN…AGSHGHNLKD (82 aa)) are cytoplasmic. A helical membrane pass occupies residues 83-103 (LSLLTTLGIAFQTLGVVYGDM). Residues 104 to 129 (GTSPLYVFSDVFSKVPIRSEVDVLGA) lie on the Extracellular side of the membrane. A helical transmembrane segment spans residues 130–150 (LSLVIYTIAVIPLAKYVFVVL). At 151–216 (KANDNGEGGT…ALETKGYLKT (66 aa)) the chain is on the cytoplasmic side. A helical membrane pass occupies residues 217–237 (LLLLLVLMGTSMIIGDGILTP). The Extracellular segment spans residues 238–253 (AMSVMSAMSGLQGEVK). A helical transmembrane segment spans residues 254–274 (GFGTNALVMSSIVILVALFSI). Topologically, residues 275 to 281 (QRFGTGK) are cytoplasmic. Residues 282-302 (VGFLFAPVLALWFFSLGAIGI) traverse the membrane as a helical segment. Topologically, residues 303–335 (YNLLKYDFTVIRALNPFYIVLFFNKNSKQAWSA) are extracellular. Residues 336–356 (LGGCVLCITGAEAMFADLGHF) form a helical membrane-spanning segment. Over 357–363 (SVRSIQM) the chain is Cytoplasmic. Residues 364 to 384 (AFTCVVFPCLLLAYMGQAAYL) traverse the membrane as a helical segment. At 385–402 (TKHPEASARIFYDSVPKS) the chain is on the extracellular side. A helical membrane pass occupies residues 403–423 (LFWPVFVIATLAAMIASQAMI). Residues 424–454 (SATFSCVKQAMALGCFPRLKIIHTSKKRIGQ) lie on the Cytoplasmic side of the membrane. Residues 455–475 (IYIPVINWFLMIMCILVVSIF) form a helical membrane-spanning segment. Residues 476 to 480 (RSTTH) lie on the Extracellular side of the membrane. Helical transmembrane passes span 481–501 (IANAYGIAEVGVMMVSTVLVT) and 502–522 (LVMLLIWQTNIFLALCFPLIF). The Extracellular segment spans residues 523 to 536 (GSVETIYLLAVLTK). A helical membrane pass occupies residues 537-557 (ILEGGWVPLVFATFFLTVMYI). Residues 558 to 827 (WNYGSVLKYQ…ILQAGMTYMV (270 aa)) lie on the Cytoplasmic side of the membrane. A disordered region spans residues 728 to 750 (RSEPEQELDSEVLPSSSVGSSME). Over residues 738–748 (EVLPSSSVGSS) the composition is skewed to low complexity.

The protein belongs to the HAK/KUP transporter (TC 2.A.72.3) family.

The protein localises to the cell membrane. Putative potassium transporter. The polypeptide is Putative potassium transporter 12 (POT12) (Arabidopsis thaliana (Mouse-ear cress)).